The sequence spans 637 residues: Threonine--tRNA ligase (637 aa).

The region spanning 1–65 (MIAIQLPDGS…EADEALSIIT (65 aa)) is the TGS domain. The interval 246 to 537 (DHRKLGRELD…LIEEHAGALP (292 aa)) is catalytic. Residues C337, H388, and H514 each coordinate Zn(2+).

It belongs to the class-II aminoacyl-tRNA synthetase family. As to quaternary structure, homodimer. Requires Zn(2+) as cofactor.

The protein resides in the cytoplasm. The enzyme catalyses tRNA(Thr) + L-threonine + ATP = L-threonyl-tRNA(Thr) + AMP + diphosphate + H(+). Its function is as follows. Catalyzes the attachment of threonine to tRNA(Thr) in a two-step reaction: L-threonine is first activated by ATP to form Thr-AMP and then transferred to the acceptor end of tRNA(Thr). Also edits incorrectly charged L-seryl-tRNA(Thr). This Leptothrix cholodnii (strain ATCC 51168 / LMG 8142 / SP-6) (Leptothrix discophora (strain SP-6)) protein is Threonine--tRNA ligase.